The following is a 660-amino-acid chain: MSLAVSLRRALLVLLTGAIFILTVLYWNQGVTKAQAYNEALERPHSHHDASGFPIPVEKSWTYKCENDRCMRVGHHGKSAKRVSFISCSMTCGDVNIWPHPTQKFLLSSQTHSFSVEDVQLHVDTAHREVRKQLQLAFDWFLKDLRLIQRLDYVGSSSEPTVSESSSKSRHHADLEPAATLFGATFGVKKAGDLTSVQVKISVLKSGDLNFSLDNDETYQLSTQTEGHRLQVEIIANSYFGARHGLSTLQQLIWFDDEDHLLHTYANSKVKDAPKFRYRGLMLDTSRHFFSVESIKRTIVGMGLAKMNRFHWHLTDAQSFPYISRYYPELAVHGAYSESETYSEQDVREVAEFAKIYGVQVIPEIDAPAHAGNGWDWGPKRGMGELAMCINQQPWSFYCGEPPCGQLNPKNNYTYLILQRIYEELLQHTGPTDFFHLGGDEVNLDCWAQYFNDTDLRGLWCDFMLQAMARLKLANNGVAPKHVAVWSSALTNTKCLPNSQFTVQVWGGSTWQENYDLLDNGYNVIFSHVDAWYLDCGFGSWRATGDAACAPYRTWQNVYKHRPWERMRLDKKRKKQVLGGEVCMWTEQVDENQLDNRLWPRTAALAERLWTDPSDDHDMDIVPPDVFRRISLFRNRLVELGIRAEALFPKYCAQNPGECI.

The signal sequence occupies residues 1 to 36 (MSLAVSLRRALLVLLTGAIFILTVLYWNQGVTKAQA). Residues Asn210, Asn412, and Asn452 are each glycosylated (N-linked (GlcNAc...) asparagine).

Belongs to the glycosyl hydrolase 20 family. In terms of tissue distribution, in third instar larval and early pupal brains, expressed in cells sending projections across the interhemispheric junction. In adult brain, expressed in mushroom body, ellipsoid body and pars intercerebralis.

The catalysed reaction is Hydrolysis of terminal non-reducing N-acetyl-D-hexosamine residues in N-acetyl-beta-D-hexosaminides.. In terms of biological role, involved in brain restructurization via hormonal control during metamorphosis. Implicated in N-glycan processing. The chain is Probable beta-hexosaminidase fdl (fdl) from Drosophila melanogaster (Fruit fly).